The chain runs to 261 residues: 22 kDa alpha-zein 8b (261 aa).

Positions 1-16 (LALLALLALFVSATNA) are cleaved as a signal peptide.

It belongs to the zein family.

Functionally, zeins are major seed storage proteins. The sequence is that of 22 kDa alpha-zein 8b from Zea mays (Maize).